A 317-amino-acid polypeptide reads, in one-letter code: Tetraspanin-15 (317 aa).

Positions 1-43 (MADNAQVVPVEEPAATATATATATATTEPEAKSSDQMESQSDN) are disordered. The Cytoplasmic segment spans residues 1 to 60 (MADNAQVVPVEEPAATATATATATATTEPEAKSSDQMESQSDNKPPMGTLMALVNILAAG). Over residues 7 to 28 (VVPVEEPAATATATATATATTE) the composition is skewed to low complexity. Residues 61–81 (VLPIFTFVLSLTLLGYAVWLL) traverse the membrane as a helical segment. The Extracellular segment spans residues 82–96 (YMRSYDCEDILGLPR). The chain crosses the membrane as a helical span at residues 97–117 (VQTLASVGLLAVFVVSNAALF). The Cytoplasmic portion of the chain corresponds to 118–126 (LRRKFPMPA). The chain crosses the membrane as a helical span at residues 127-147 (LVVMVVVLLLMLFIGLAYAGV). The Extracellular segment spans residues 148 to 287 (NEMQSRRFPA…IRSVRRKWWQ (140 aa)). The N-linked (GlcNAc...) asparagine glycan is linked to Asn-224. The chain crosses the membrane as a helical span at residues 288 to 308 (LGIFLIVISILLLMSHLLIFL). The Cytoplasmic segment spans residues 309 to 317 (ATFWERFKG).

The protein belongs to the tetraspanin (TM4SF) family.

It localises to the membrane. In terms of biological role, may be involved in the regulation of cell differentiation. The protein is Tetraspanin-15 (TET15) of Arabidopsis thaliana (Mouse-ear cress).